Reading from the N-terminus, the 1939-residue chain is Myosin-2 (1939 aa).

Residues 33-82 enclose the Myosin N-terminal SH3-like domain; the sequence is DAKTSVFVAEPKESFVKGTIQSREGGKVTVKTEAGATLTVKEDQVFPMNP. Threonine 64 and threonine 69 each carry phosphothreonine. The Myosin motor domain occupies 86 to 782; the sequence is DKIEDMAMMT…LLGLLEEMRD (697 aa). At lysine 130 the chain carries N6,N6,N6-trimethyllysine. ATP is bound at residue 179 to 186; that stretch reads GESGAGKT. At tyrosine 389 the chain carries Phosphotyrosine. At serine 392 the chain carries Phosphoserine. A Phosphothreonine modification is found at threonine 419. Residue serine 625 is modified to Phosphoserine. The tract at residues 659–681 is actin-binding; sequence LNKLMTNLRSTHPHFVRCIIPNE. Histidine 757 carries the post-translational modification Pros-methylhistidine. The segment at 761–775 is actin-binding; that stretch reads KFGHTKVFFKAGLLG. Positions 785–814 constitute an IQ domain; it reads LAQLITRTQARCRGFLARVEYQKMVERRES. Residues 843-1939 are a coiled coil; sequence LLKSAESEKE…EVHTKVISEE (1097 aa). A phosphoserine mark is found at serine 1092 and serine 1096. Disordered regions lie at residues 1126 to 1147 and 1153 to 1172; these read IEAE…SREL and RLEE…KKRE. The span at 1128-1147 shows a compositional bias: basic and acidic residues; the sequence is AERASRAKAEKQRSDLSREL. Phosphoserine is present on residues serine 1162 and serine 1237. Threonine 1241 is modified (phosphothreonine). Serine 1243 is subject to Phosphoserine. A Phosphothreonine modification is found at threonine 1255. Phosphoserine is present on serine 1261. Threonine 1286 is subject to Phosphothreonine. Residues serine 1288, serine 1292, serine 1303, and serine 1306 each carry the phosphoserine modification. A Phosphotyrosine modification is found at tyrosine 1464. Phosphothreonine is present on threonine 1467. Serine 1474 is modified (phosphoserine). At tyrosine 1492 the chain carries Phosphotyrosine. Phosphoserine is present on serine 1495. Residue threonine 1501 is modified to Phosphothreonine. At serine 1514 the chain carries Phosphoserine. Threonine 1517 carries the phosphothreonine modification. Serine 1542, serine 1554, serine 1574, serine 1600, serine 1603, serine 1714, and serine 1726 each carry phosphoserine. Phosphothreonine occurs at positions 1730 and 1736. At serine 1739 the chain carries Phosphoserine. The disordered stretch occupies residues 1885 to 1915; that stretch reads QAEEAEEQSNTNLSKFRKLQHELEEAEERAD.

The protein belongs to the TRAFAC class myosin-kinesin ATPase superfamily. Myosin family. In terms of assembly, muscle myosin is a hexameric protein that consists of 2 heavy chain subunits (MHC), 2 alkali light chain subunits (MLC) and 2 regulatory light chain subunits (MLC-2). Interacts with GCSAM.

The protein resides in the cytoplasm. It localises to the myofibril. In terms of biological role, myosins are actin-based motor molecules with ATPase activity essential for muscle contraction. This Sus scrofa (Pig) protein is Myosin-2 (MYH2).